The sequence spans 350 residues: MSKRKLTQNQQRRIQSNNAKTLHRHQHRHKSDIDWQDDMLGDFQDGTVVTRYAVHADVENEQGEIVRCNLRRTLKSVVVGDRVVWRKGKEQLQGVRGVIEAVQPRHNQIVRPDYYDGLKSIAANIDRIIIVSAVLPNLSLNIIDRYLVVCESSNIPAVIVVNKADLLSSEARTEVSLQLEIYQKIGYETLLISAKSGENMDKLTALLSEGTSIFVGQSGVGKSSLINYILPEVNAQTGKLSQVSGLGQHTTTSSRLYHLSQGGNLIDSPGIREFGLWHLDREQITNGYREFQYFLGTCKFRDCKHLHDPGCAIQLAVKEGKIDPLRFENYHRLITSLSETKSQRHFISAN.

The segment at 1–30 (MSKRKLTQNQQRRIQSNNAKTLHRHQHRHK) is disordered. The segment covering 7-20 (TQNQQRRIQSNNAK) has biased composition (polar residues). Residues 21-30 (TLHRHQHRHK) show a composition bias toward basic residues. A CP-type G domain is found at 106-274 (HNQIVRPDYY…LIDSPGIREF (169 aa)). Residues 162-165 (NKAD) and 216-224 (GQSGVGKSS) contribute to the GTP site. Zn(2+) contacts are provided by cysteine 298, cysteine 303, histidine 305, and cysteine 311.

The protein belongs to the TRAFAC class YlqF/YawG GTPase family. RsgA subfamily. In terms of assembly, monomer. Associates with 30S ribosomal subunit, binds 16S rRNA. The cofactor is Zn(2+).

Its subcellular location is the cytoplasm. Functionally, one of several proteins that assist in the late maturation steps of the functional core of the 30S ribosomal subunit. Helps release RbfA from mature subunits. May play a role in the assembly of ribosomal proteins into the subunit. Circularly permuted GTPase that catalyzes slow GTP hydrolysis, GTPase activity is stimulated by the 30S ribosomal subunit. The protein is Small ribosomal subunit biogenesis GTPase RsgA of Histophilus somni (strain 129Pt) (Haemophilus somnus).